The sequence spans 232 residues: 5'-methylthioadenosine/S-adenosylhomocysteine nucleosidase (232 aa).

The active-site Proton acceptor is Glu12. Substrate-binding positions include Gly78, Ile152, and 173–174 (ME). The active-site Proton donor is the Asp197.

This sequence belongs to the PNP/UDP phosphorylase family. MtnN subfamily. In terms of assembly, homodimer.

The enzyme catalyses S-adenosyl-L-homocysteine + H2O = S-(5-deoxy-D-ribos-5-yl)-L-homocysteine + adenine. It catalyses the reaction S-methyl-5'-thioadenosine + H2O = 5-(methylsulfanyl)-D-ribose + adenine. The catalysed reaction is 5'-deoxyadenosine + H2O = 5-deoxy-D-ribose + adenine. It participates in amino-acid biosynthesis; L-methionine biosynthesis via salvage pathway; S-methyl-5-thio-alpha-D-ribose 1-phosphate from S-methyl-5'-thioadenosine (hydrolase route): step 1/2. Its function is as follows. Catalyzes the irreversible cleavage of the glycosidic bond in both 5'-methylthioadenosine (MTA) and S-adenosylhomocysteine (SAH/AdoHcy) to adenine and the corresponding thioribose, 5'-methylthioribose and S-ribosylhomocysteine, respectively. Also cleaves 5'-deoxyadenosine, a toxic by-product of radical S-adenosylmethionine (SAM) enzymes, into 5-deoxyribose and adenine. Thus, is required for in vivo function of the radical SAM enzymes biotin synthase and lipoic acid synthase, that are inhibited by 5'-deoxyadenosine accumulation. The sequence is that of 5'-methylthioadenosine/S-adenosylhomocysteine nucleosidase from Salmonella paratyphi B (strain ATCC BAA-1250 / SPB7).